The following is a 149-amino-acid chain: MSVMITILNGPNLNFLGQREPKIYGTETLEDIEKNCREWAKRADVIINFYQSNYEGQLVEWIQEAIGLSSGLIINPAAYSHTSVALLDALKMFSGPKVEVHLSHIYRREAFRHHSYTSIGVDAIISGCGSDGYRFALEYIAKQLINCKR.

The active-site Proton acceptor is the Y24. Residues N75, H81, and D88 each coordinate substrate. H101 functions as the Proton donor in the catalytic mechanism. Substrate-binding positions include L102 to S103 and R112.

Belongs to the type-II 3-dehydroquinase family. In terms of assembly, homododecamer.

It catalyses the reaction 3-dehydroquinate = 3-dehydroshikimate + H2O. It participates in metabolic intermediate biosynthesis; chorismate biosynthesis; chorismate from D-erythrose 4-phosphate and phosphoenolpyruvate: step 3/7. Catalyzes a trans-dehydration via an enolate intermediate. This Bartonella tribocorum (strain CIP 105476 / IBS 506) protein is 3-dehydroquinate dehydratase.